Reading from the N-terminus, the 134-residue chain is Loki profilin-1 (134 aa).

The segment at 55–62 is loki loop; the sequence is LALGKKGI.

Belongs to the Asgard profilin family.

Its subcellular location is the cytoplasm. The protein localises to the cytoskeleton. Inhibition of rabbit actin polymerization is reduced by phosphatidylinositol-(4,5)-P2(1,2-dipalmitoyl), a soluble form of the phospholipid phosphatidylinositol, suggesting an unknown lipid might regulate actin-profilin interaction in vivo. Binds to actin and affects the structure of the cytoskeleton. At high concentrations inhibits spontaneous rabbit actin nucleation. This strongly suggests this archaea has a profilin-regulated actin system, and actin-type genes can be identified in this organism. The polypeptide is Loki profilin-1 (Lokiarchaeum sp. (strain GC14_75)).